The primary structure comprises 179 residues: Large ribosomal subunit protein uL6 (179 aa).

This sequence belongs to the universal ribosomal protein uL6 family. In terms of assembly, part of the 50S ribosomal subunit.

Functionally, this protein binds to the 23S rRNA, and is important in its secondary structure. It is located near the subunit interface in the base of the L7/L12 stalk, and near the tRNA binding site of the peptidyltransferase center. The sequence is that of Large ribosomal subunit protein uL6 from Chlorobium limicola (strain DSM 245 / NBRC 103803 / 6330).